The sequence spans 240 residues: MAQTSKYERVVLKLSGEALAGDDGFGINPIIIKSIAEQVAEVAKLDCEIAVIVGGGNIWRGKTGSDLGMDRGTADYMGMLATVMNALALQDSLEQLECDTRVLTSIEMKQVAEPYIRRRAIRHLEKNRVVIFAAGIGNPYFSTDTTAALRAAEVEADVILMGKNNVDGVYSADPKVDPNAIKYEHLTHIQMLQEGLQVMDSTASSFCMDNNIPLNVFSITEEGNIKRAVMGEKIGTLITK.

Residue 13–16 participates in ATP binding; the sequence is KLSG. An involved in allosteric activation by GTP region spans residues 21 to 26; the sequence is GDDGFG. Residue Gly55 participates in UMP binding. Residues Gly56 and Arg60 each contribute to the ATP site. UMP contacts are provided by residues Asp75 and 136–143; that span reads IGNPYFST. The ATP site is built by Asn164, Tyr170, and Asp173.

It belongs to the UMP kinase family. Homohexamer.

The protein resides in the cytoplasm. The catalysed reaction is UMP + ATP = UDP + ADP. The protein operates within pyrimidine metabolism; CTP biosynthesis via de novo pathway; UDP from UMP (UMPK route): step 1/1. Its activity is regulated as follows. Allosterically activated by GTP. Inhibited by UTP. Its function is as follows. Catalyzes the reversible phosphorylation of UMP to UDP. This is Uridylate kinase from Staphylococcus saprophyticus subsp. saprophyticus (strain ATCC 15305 / DSM 20229 / NCIMB 8711 / NCTC 7292 / S-41).